A 126-amino-acid chain; its full sequence is Large ribosomal subunit protein bL12 (126 aa).

It belongs to the bacterial ribosomal protein bL12 family. As to quaternary structure, homodimer. Part of the ribosomal stalk of the 50S ribosomal subunit. Forms a multimeric L10(L12)X complex, where L10 forms an elongated spine to which 2 to 4 L12 dimers bind in a sequential fashion. Binds GTP-bound translation factors.

Functionally, forms part of the ribosomal stalk which helps the ribosome interact with GTP-bound translation factors. Is thus essential for accurate translation. In Paracidovorax citrulli (strain AAC00-1) (Acidovorax citrulli), this protein is Large ribosomal subunit protein bL12.